The primary structure comprises 220 residues: Deoxyribose-phosphate aldolase (220 aa).

The active-site Proton donor/acceptor is D89. K152 functions as the Schiff-base intermediate with acetaldehyde in the catalytic mechanism. Residue K181 is the Proton donor/acceptor of the active site.

Belongs to the DeoC/FbaB aldolase family. DeoC type 1 subfamily.

The protein localises to the cytoplasm. It carries out the reaction 2-deoxy-D-ribose 5-phosphate = D-glyceraldehyde 3-phosphate + acetaldehyde. It functions in the pathway carbohydrate degradation; 2-deoxy-D-ribose 1-phosphate degradation; D-glyceraldehyde 3-phosphate and acetaldehyde from 2-deoxy-alpha-D-ribose 1-phosphate: step 2/2. In terms of biological role, catalyzes a reversible aldol reaction between acetaldehyde and D-glyceraldehyde 3-phosphate to generate 2-deoxy-D-ribose 5-phosphate. In Enterococcus faecalis (strain ATCC 700802 / V583), this protein is Deoxyribose-phosphate aldolase.